The primary structure comprises 59 residues: Large ribosomal subunit protein eL37 (59 aa).

Zn(2+) is bound by residues Cys20, Cys23, Cys35, and Cys38. A C4-type zinc finger spans residues Cys20 to Cys38.

The protein belongs to the eukaryotic ribosomal protein eL37 family. Zn(2+) serves as cofactor.

Functionally, binds to the 23S rRNA. This Archaeoglobus fulgidus (strain ATCC 49558 / DSM 4304 / JCM 9628 / NBRC 100126 / VC-16) protein is Large ribosomal subunit protein eL37 (rpl37e).